A 228-amino-acid polypeptide reads, in one-letter code: Transmembrane protein 186 (228 aa).

Residues 1 to 93 (MDMMMMSTRL…RGLRALSRLK (93 aa)) lie on the Mitochondrial matrix side of the membrane. A helical transmembrane segment spans residues 94–112 (LLQTGITVVLLPTVYYLHL). The Mitochondrial intermembrane segment spans residues 113–118 (QGQASV). Residues 119–141 (LVLNRSIGIALFAGVMLYSISHF) traverse the membrane as a helical segment. At 142-228 (VRRVVGMMYL…AFGKVFGSLS (87 aa)) the chain is on the mitochondrial matrix side.

Belongs to the TMEM186 family.

It localises to the mitochondrion inner membrane. Its function is as follows. May be required for efficient assembly of the mitochondrial complex I. This chain is Transmembrane protein 186, found in Danio rerio (Zebrafish).